Consider the following 314-residue polypeptide: Ribonuclease Z (314 aa).

Zn(2+) is bound by residues His62, His64, Asp66, His67, His139, Asp210, and His268. Residue Asp66 is the Proton acceptor of the active site.

The protein belongs to the RNase Z family. In terms of assembly, homodimer. It depends on Zn(2+) as a cofactor.

It carries out the reaction Endonucleolytic cleavage of RNA, removing extra 3' nucleotides from tRNA precursor, generating 3' termini of tRNAs. A 3'-hydroxy group is left at the tRNA terminus and a 5'-phosphoryl group is left at the trailer molecule.. In terms of biological role, zinc phosphodiesterase, which displays some tRNA 3'-processing endonuclease activity. Probably involved in tRNA maturation, by removing a 3'-trailer from precursor tRNA. In Acaryochloris marina (strain MBIC 11017), this protein is Ribonuclease Z.